Here is a 780-residue protein sequence, read N- to C-terminus: MDEQAGPGVFFSNNHPGAGGAKGLGPLAEAAAAGDGAAAAGAARAQYSLPGILHFLQHEWARFEVERAQWEVERAELQAQIAFLQGERKGQENLKKDLVRRIKMLEYALKQERAKYHKLKYGTELNQGDMKPPSYDSDEGNETEVQPQQNSQFMWKQGRQLLRQYLQEVGYTDTILDVKSKRVRALLGFSSDVTDREDDKNQDSVINGTEAEVKETAMIGKSELTDSASVLDNFKFLENAAADFSDEDEDEDIDGREKSVIDTSTIVRKKPLPDTSEDRDTKEALKEFDFLVASEEGDNESRSAGDGTDWEKEDQCLTPERWNVDQGVITRLKEQYKKERKGKKGVKRPNRSKLQDMLANLRDVDELPSLQPSVGSPSRPSSSRLPEQDISRADEVEALTFPPSSGKSFIMGADEALESELGLGELAGLTVANEADSLAYDIANNKDALRKTWNPKFTLRSHFDGIRALAFHPIEPVLITASEDHTLKMWNLQKTAPAKKSTSLDVEPIYTFRAHKGPVLCVVMSSNGEQCYSGGTDGLIQSWSTTNPNVDPYDSYDPSVLRGPLLGHTDAVWGLAYSAAHQRLLSCSADGTLRLWTTTEVAPALTVFNDNQELGIPASVDLVSSDPSHMVASFSKGYTSIFNMETQQRILTLESNVDSTASSSCQINRVISHPTLPISITAHEDRHIKFYDNNTGKLIHSMVAHLEAVTSLAVDPNGLYLMSGSHDCSIRLWNLESKTCIQEFTAHRKKFEESIHDVAFHPSKCYIASAGADALAKVFV.

The stretch at 53 to 120 forms a coiled coil; it reads LHFLQHEWAR…QERAKYHKLK (68 aa). Residues 55–63 are caveolin-binding; that stretch reads FLQHEWARF. The interval 124–145 is disordered; that stretch reads ELNQGDMKPPSYDSDEGNETEV. At Ser-137 the chain carries Phosphoserine. Positions 149 to 166 are calmodulin-binding; the sequence is QNSQFMWKQGRQLLRQYL. At Thr-225 the chain carries Phosphothreonine. A phosphoserine mark is found at Ser-227, Ser-229, Ser-245, and Ser-259. Disordered regions lie at residues 290–321, 334–353, and 363–388; these read FLVA…TPER, EQYK…NRSK, and DVDE…LPEQ. Over residues 299 to 315 the composition is skewed to basic and acidic residues; that stretch reads NESRSAGDGTDWEKEDQ. Residues 338–351 show a composition bias toward basic residues; sequence KERKGKKGVKRPNR. WD repeat units follow at residues 461 to 500, 514 to 553, 567 to 606, 662 to 701, 704 to 743, and 750 to 780; these read SHFD…PAKK, AHKG…VDPY, GHTD…PALT, SSSC…LIHS, AHLE…CIQE, and KFEE…KVFV.

This sequence belongs to the WD repeat striatin family. As to quaternary structure, part of the core of STRIPAK complexes composed of PP2A catalytic and scaffolding subunits, the striatins (PP2A regulatory subunits), the striatin-associated proteins MOB4, STRIP1 and STRIP2, PDCD10 and members of the STE20 kinases, such as STK24 and STK26. Interacts with CTTNBP2; this interaction may regulate dendritic spine distribution of STRN. Activation of glutamate receptors weakens the interaction with CTTNBP2. Mainly expressed in the central nervous system. Mostly confined in dendrites, not in axons, and is most abundant in dendritic spines.

Its subcellular location is the cytoplasm. It localises to the membrane. The protein localises to the cell projection. The protein resides in the dendritic spine. In terms of biological role, calmodulin-binding scaffolding protein which is the center of the striatin-interacting phosphatase and kinase (STRIPAK) complexes. STRIPAK complexes have critical roles in protein (de)phosphorylation and are regulators of multiple signaling pathways including Hippo, MAPK, nuclear receptor and cytoskeleton remodeling. Different types of STRIPAK complexes are involved in a variety of biological processes such as cell growth, differentiation, apoptosis, metabolism and immune regulation. This Rattus norvegicus (Rat) protein is Striatin (Strn).